Reading from the N-terminus, the 184-residue chain is UPF0301 protein Sden_2674 (184 aa).

It belongs to the UPF0301 (AlgH) family.

In Shewanella denitrificans (strain OS217 / ATCC BAA-1090 / DSM 15013), this protein is UPF0301 protein Sden_2674.